The chain runs to 358 residues: Carbamoyl phosphate synthase small chain (358 aa).

CPSase stretches follow at residues 1–168 (MYNR…PALG) and 1–171 (MYNR…GRGR). L-glutamine-binding residues include serine 46, glycine 220, and glycine 222. Residues 172–358 (RVVLVDLGMK…FIKNIDNNMK (187 aa)) enclose the Glutamine amidotransferase type-1 domain. The active-site Nucleophile is cysteine 247. Residues methionine 248, glutamine 251, asparagine 289, glycine 291, and tyrosine 292 each coordinate L-glutamine. Active-site residues include histidine 332 and glutamate 334.

It belongs to the CarA family. In terms of assembly, composed of two chains; the small (or glutamine) chain promotes the hydrolysis of glutamine to ammonia, which is used by the large (or ammonia) chain to synthesize carbamoyl phosphate. Tetramer of heterodimers (alpha,beta)4.

The enzyme catalyses hydrogencarbonate + L-glutamine + 2 ATP + H2O = carbamoyl phosphate + L-glutamate + 2 ADP + phosphate + 2 H(+). It catalyses the reaction L-glutamine + H2O = L-glutamate + NH4(+). It functions in the pathway amino-acid biosynthesis; L-arginine biosynthesis; carbamoyl phosphate from bicarbonate: step 1/1. Its pathway is pyrimidine metabolism; UMP biosynthesis via de novo pathway; (S)-dihydroorotate from bicarbonate: step 1/3. In terms of biological role, small subunit of the glutamine-dependent carbamoyl phosphate synthetase (CPSase). CPSase catalyzes the formation of carbamoyl phosphate from the ammonia moiety of glutamine, carbonate, and phosphate donated by ATP, constituting the first step of 2 biosynthetic pathways, one leading to arginine and/or urea and the other to pyrimidine nucleotides. The small subunit (glutamine amidotransferase) binds and cleaves glutamine to supply the large subunit with the substrate ammonia. The sequence is that of Carbamoyl phosphate synthase small chain from Fusobacterium nucleatum subsp. nucleatum (strain ATCC 25586 / DSM 15643 / BCRC 10681 / CIP 101130 / JCM 8532 / KCTC 2640 / LMG 13131 / VPI 4355).